A 311-amino-acid polypeptide reads, in one-letter code: Thioredoxin reductase (311 aa).

FAD-binding positions include Phe31–Gln39 and Glu32–Gln39. Cys133 and Cys136 are joined by a disulfide. Asp281–Val290 contributes to the FAD binding site.

The protein belongs to the class-II pyridine nucleotide-disulfide oxidoreductase family. As to quaternary structure, homodimer. Requires FAD as cofactor.

The protein resides in the cytoplasm. It carries out the reaction [thioredoxin]-dithiol + NADP(+) = [thioredoxin]-disulfide + NADPH + H(+). In Helicobacter pylori (strain J99 / ATCC 700824) (Campylobacter pylori J99), this protein is Thioredoxin reductase (trxB).